Consider the following 284-residue polypeptide: 2-dehydro-3-deoxyphosphooctonate aldolase (284 aa).

It belongs to the KdsA family.

It localises to the cytoplasm. It catalyses the reaction D-arabinose 5-phosphate + phosphoenolpyruvate + H2O = 3-deoxy-alpha-D-manno-2-octulosonate-8-phosphate + phosphate. It functions in the pathway carbohydrate biosynthesis; 3-deoxy-D-manno-octulosonate biosynthesis; 3-deoxy-D-manno-octulosonate from D-ribulose 5-phosphate: step 2/3. Its pathway is bacterial outer membrane biogenesis; lipopolysaccharide biosynthesis. The sequence is that of 2-dehydro-3-deoxyphosphooctonate aldolase from Pseudoalteromonas translucida (strain TAC 125).